Here is a 184-residue protein sequence, read N- to C-terminus: MPQSKSRKIAILGYRSVGKSSLTIQFVEGQFVDSYDPTIENTFTKLITVNGQEYHLQLVDTAGQDEYSIFPQTYSIDINGYILVYSVTSIKSFEVIKVIHGKLLDMVGKVQIPIMLVGNKKDLHMERVISYEEGKALAESWNAAFLESSAKENQTAVDVFRRIILEAEKMDGAASQGKSSCSVM.

Residue lysine 8 forms a Glycyl lysine isopeptide (Lys-Gly) (interchain with G-Cter in ubiquitin) linkage. GDP is bound by residues serine 16, valine 17, glycine 18, lysine 19, serine 20, serine 21, valine 32, and aspartate 33. Serine 16 provides a ligand contact to GTP. Residues glycine 18, lysine 19, serine 20, serine 21, and valine 32 each coordinate GTP. Serine 20 contributes to the Mg(2+) binding site. GTP contacts are provided by tyrosine 35, threonine 38, asparagine 119, and aspartate 122. The Effector region signature appears at tyrosine 35 to phenylalanine 43. Mg(2+) is bound at residue threonine 38. Residues asparagine 119 and aspartate 122 each contribute to the GDP site. At serine 130 the chain carries Phosphoserine; by MAPKAPK5. Alanine 150 is a GDP binding site. A GTP-binding site is contributed by alanine 150. Cysteine 181 carries the post-translational modification Cysteine methyl ester. Cysteine 181 carries S-farnesyl cysteine lipidation. Positions serine 182–methionine 184 are cleaved as a propeptide — removed in mature form.

It belongs to the small GTPase superfamily. Rheb family. As to quaternary structure, associates with the mTORC1 complex (MTOR, MLST8 and RPTOR) in a guanyl nucleotide-independent manner. Interacts with TSC2. Interacts with MCRS1; the interaction maintains RHEB at the lysosome in its active GTP-bound form and prevents its interaction with the mTORC1 complex inhibitor TSC2, ensuring activation of the mTORC1 complex by RHEB. Interacts (when prenylated) with PDE6D; this promotes release from membranes. Post-translationally, farnesylation is important for efficiently activating mTORC1-mediated signaling. In terms of processing, polyubiquitinated in response to amino acid, promoting its interaction with MTOR and mTORC1 activation. Deubiquitination by ATXN3 promotes recruitment of the TSC-TBC complex and RHEB inactivation by TSC2. Monoubiquitinated at Lys-8 by RNF152, promoting its association with the TSC-TBC complex. Deubiquitinated at Lys-8 by USP4, promoting mTORC1 activation. Phosphorylation by MAPKAPK5 impairs GTP-binding and inactivation. Ubiquitous. Highest levels observed in skeletal and cardiac muscle.

The protein localises to the endomembrane system. It is found in the lysosome membrane. Its subcellular location is the golgi apparatus membrane. The protein resides in the endoplasmic reticulum membrane. It localises to the cytoplasm. The protein localises to the cytosol. The enzyme catalyses GTP + H2O = GDP + phosphate + H(+). Its activity is regulated as follows. Alternates between an inactive form bound to GDP and an active form bound to GTP. Inactivated by the TSC-TBC complex via the GTPase activating protein (GAP) domain of TSC2. Autoinhibited by Tyr-35, which constrains the active site conformation, restricting the access of the catalytic Asp-65 to the nucleotide-binding pocket. Specifically inhibited by NR1 (4-bromo-6-(3,4-dichlorophenylthio)-1-(4-(dimethylcarbamoyl)benzyl)-1H-indole-2-carboxylic acid). Small GTPase that acts as an allosteric activator of the canonical mTORC1 complex, an evolutionarily conserved central nutrient sensor that stimulates anabolic reactions and macromolecule biosynthesis to promote cellular biomass generation and growth. In response to nutrients, growth factors or amino acids, specifically activates the protein kinase activity of MTOR, the catalytic component of the mTORC1 complex: acts by causing a conformational change that allows the alignment of residues in the active site of MTOR, thereby enhancing the phosphorylation of ribosomal protein S6 kinase (RPS6KB1 and RPS6KB2) and EIF4EBP1 (4E-BP1). RHEB is also required for localization of the TSC-TBC complex to lysosomal membranes. In response to starvation, RHEB is inactivated by the TSC-TBC complex, preventing activation of mTORC1. Has low intrinsic GTPase activity. The protein is GTP-binding protein Rheb of Homo sapiens (Human).